Consider the following 24-residue polypeptide: N-acyl-L-amino acid amidohydrolase (24 aa).

This sequence belongs to the peptidase M20 family. Homotetramer. Co(2+) serves as cofactor.

It catalyses the reaction an N-acyl-L-amino acid + H2O = an L-alpha-amino acid + a carboxylate. The catalysed reaction is an N-acetyl-L-cysteine-S-conjugate + H2O = an S-substituted L-cysteine + acetate. The protein is N-acyl-L-amino acid amidohydrolase of Parageobacillus thermoglucosidasius (Geobacillus thermoglucosidasius).